Reading from the N-terminus, the 192-residue chain is Fe/S biogenesis protein NfuA (192 aa).

The [4Fe-4S] cluster site is built by cysteine 149 and cysteine 152.

The protein belongs to the NfuA family. As to quaternary structure, homodimer. Requires [4Fe-4S] cluster as cofactor.

Involved in iron-sulfur cluster biogenesis. Binds a 4Fe-4S cluster, can transfer this cluster to apoproteins, and thereby intervenes in the maturation of Fe/S proteins. Could also act as a scaffold/chaperone for damaged Fe/S proteins. The protein is Fe/S biogenesis protein NfuA of Pseudoalteromonas atlantica (strain T6c / ATCC BAA-1087).